We begin with the raw amino-acid sequence, 316 residues long: Oligopeptide transport system permease protein AppB (316 aa).

Transmembrane regions (helical) follow at residues 10-30 (LMSI…MKAA), 100-120 (LLLM…FGVL), 138-158 (FIGL…VLSV), 177-197 (IFDR…ADMA), 240-260 (LPVI…SVVV), and 290-310 (VISA…YAIV). The region spanning 96–303 (LPNTLLLMLV…VLVVVGNLIA (208 aa)) is the ABC transmembrane type-1 domain.

It belongs to the binding-protein-dependent transport system permease family. OppBC subfamily.

The protein localises to the cell membrane. This protein is a component of an oligopeptide permease, a binding protein-dependent transport system. This APP system can completely substitute for the OPP system in both sporulation and genetic competence, though, unlike OPP, is incapable of transporting tripeptides. Probably responsible for the translocation of the substrate across the membrane. The protein is Oligopeptide transport system permease protein AppB (appB) of Bacillus subtilis (strain 168).